Here is a 608-residue protein sequence, read N- to C-terminus: Putative pentatricopeptide repeat-containing protein At1g16830 (608 aa).

13 PPR repeats span residues 107–141 (KPRV…GFVP), 142–172 (NTRA…IRFR), 173–210 (NFFS…GFYP), 211–245 (NRER…GISV), 246–280 (SVNV…GCSP), 281–315 (NLVT…GLAP), 316–350 (DIVL…KLVP), 351–381 (DQYT…IGTD), 383–417 (DLVT…DFAL), 418–452 (DCYT…KKHL), 453–487 (DAHF…KYPL), 488–522 (DVVS…GIYP), and 523–557 (NRRT…GVEL).

This sequence belongs to the PPR family. P subfamily.

The sequence is that of Putative pentatricopeptide repeat-containing protein At1g16830 from Arabidopsis thaliana (Mouse-ear cress).